A 347-amino-acid chain; its full sequence is Selenide, water dikinase (347 aa).

Cysteine 16 is an active-site residue. ATP-binding positions include lysine 19 and 47–49; that span reads TRD. Aspartate 50 contacts Mg(2+). ATP contacts are provided by residues aspartate 67, aspartate 90, and 138 to 140; that span reads GHS. A Mg(2+)-binding site is contributed by aspartate 90. Aspartate 226 is a Mg(2+) binding site.

Belongs to the selenophosphate synthase 1 family. Class I subfamily. In terms of assembly, homodimer. Mg(2+) serves as cofactor.

It carries out the reaction hydrogenselenide + ATP + H2O = selenophosphate + AMP + phosphate + 2 H(+). Functionally, synthesizes selenophosphate from selenide and ATP. This is Selenide, water dikinase from Photorhabdus laumondii subsp. laumondii (strain DSM 15139 / CIP 105565 / TT01) (Photorhabdus luminescens subsp. laumondii).